The sequence spans 255 residues: Triosephosphate isomerase (255 aa).

Residue 9 to 11 (NWK) participates in substrate binding. The Electrophile role is filled by H95. Catalysis depends on E167, which acts as the Proton acceptor. Substrate-binding positions include G173, S212, and 233–234 (GG).

This sequence belongs to the triosephosphate isomerase family. In terms of assembly, homodimer.

The protein localises to the cytoplasm. It catalyses the reaction D-glyceraldehyde 3-phosphate = dihydroxyacetone phosphate. It functions in the pathway carbohydrate biosynthesis; gluconeogenesis. The protein operates within carbohydrate degradation; glycolysis; D-glyceraldehyde 3-phosphate from glycerone phosphate: step 1/1. Functionally, involved in the gluconeogenesis. Catalyzes stereospecifically the conversion of dihydroxyacetone phosphate (DHAP) to D-glyceraldehyde-3-phosphate (G3P). The protein is Triosephosphate isomerase of Photorhabdus laumondii subsp. laumondii (strain DSM 15139 / CIP 105565 / TT01) (Photorhabdus luminescens subsp. laumondii).